The chain runs to 228 residues: ATP-dependent dethiobiotin synthetase BioD (228 aa).

Residue 13-18 (DVGKTV) participates in ATP binding. Thr-17 serves as a coordination point for Mg(2+). Lys-38 is a catalytic residue. Residues Asp-55, 116–119 (EGAG), 176–177 (NR), and 205–207 (PYI) each bind ATP. Mg(2+)-binding residues include Asp-55 and Glu-116.

The protein belongs to the dethiobiotin synthetase family. As to quaternary structure, homodimer. Mg(2+) is required as a cofactor.

The protein localises to the cytoplasm. It carries out the reaction (7R,8S)-7,8-diammoniononanoate + CO2 + ATP = (4R,5S)-dethiobiotin + ADP + phosphate + 3 H(+). It functions in the pathway cofactor biosynthesis; biotin biosynthesis; biotin from 7,8-diaminononanoate: step 1/2. Functionally, catalyzes a mechanistically unusual reaction, the ATP-dependent insertion of CO2 between the N7 and N8 nitrogen atoms of 7,8-diaminopelargonic acid (DAPA, also called 7,8-diammoniononanoate) to form a ureido ring. The sequence is that of ATP-dependent dethiobiotin synthetase BioD from Vibrio parahaemolyticus serotype O3:K6 (strain RIMD 2210633).